The sequence spans 557 residues: Dihydroxy-acid dehydratase (557 aa).

Cysteine 49 lines the [2Fe-2S] cluster pocket. Aspartate 81 contributes to the Mg(2+) binding site. [2Fe-2S] cluster is bound at residue cysteine 122. Residues aspartate 123 and lysine 124 each contribute to the Mg(2+) site. The residue at position 124 (lysine 124) is an N6-carboxylysine. Cysteine 194 is a [2Fe-2S] cluster binding site. Glutamate 446 is a binding site for Mg(2+). Serine 472 serves as the catalytic Proton acceptor.

This sequence belongs to the IlvD/Edd family. As to quaternary structure, homodimer. [2Fe-2S] cluster is required as a cofactor. The cofactor is Mg(2+).

The enzyme catalyses (2R)-2,3-dihydroxy-3-methylbutanoate = 3-methyl-2-oxobutanoate + H2O. It catalyses the reaction (2R,3R)-2,3-dihydroxy-3-methylpentanoate = (S)-3-methyl-2-oxopentanoate + H2O. It functions in the pathway amino-acid biosynthesis; L-isoleucine biosynthesis; L-isoleucine from 2-oxobutanoate: step 3/4. It participates in amino-acid biosynthesis; L-valine biosynthesis; L-valine from pyruvate: step 3/4. Functions in the biosynthesis of branched-chain amino acids. Catalyzes the dehydration of (2R,3R)-2,3-dihydroxy-3-methylpentanoate (2,3-dihydroxy-3-methylvalerate) into 2-oxo-3-methylpentanoate (2-oxo-3-methylvalerate) and of (2R)-2,3-dihydroxy-3-methylbutanoate (2,3-dihydroxyisovalerate) into 2-oxo-3-methylbutanoate (2-oxoisovalerate), the penultimate precursor to L-isoleucine and L-valine, respectively. This chain is Dihydroxy-acid dehydratase, found in Prochlorococcus marinus (strain MIT 9215).